Reading from the N-terminus, the 365-residue chain is Flagellar P-ring protein (365 aa).

The N-terminal stretch at 1–19 is a signal peptide; that stretch reads MIKFLSALILLLVTTAAQA.

Belongs to the FlgI family. In terms of assembly, the basal body constitutes a major portion of the flagellar organelle and consists of four rings (L,P,S, and M) mounted on a central rod.

The protein resides in the periplasm. It localises to the bacterial flagellum basal body. Functionally, assembles around the rod to form the L-ring and probably protects the motor/basal body from shearing forces during rotation. The chain is Flagellar P-ring protein from Escherichia coli O9:H4 (strain HS).